Consider the following 202-residue polypeptide: Lipid A acyltransferase PagP (202 aa).

The N-terminal stretch at 1 to 25 (MNYKDIINACILSGVFLLHSPSALA) is a signal peptide. Residues histidine 74, aspartate 117, and serine 118 contribute to the active site.

This sequence belongs to the lipid A palmitoyltransferase family. As to quaternary structure, homodimer.

It is found in the cell outer membrane. It carries out the reaction a lipid A + a 1,2-diacyl-sn-glycero-3-phosphocholine = a hepta-acyl lipid A + a 2-acyl-sn-glycero-3-phosphocholine. It catalyses the reaction a lipid IVA + a 1,2-diacyl-sn-glycero-3-phosphocholine = a lipid IVB + a 2-acyl-sn-glycero-3-phosphocholine. The enzyme catalyses a lipid IIA + a 1,2-diacyl-sn-glycero-3-phosphocholine = a lipid IIB + a 2-acyl-sn-glycero-3-phosphocholine. Its function is as follows. Transfers a fatty acid residue from the sn-1 position of a phospholipid to the N-linked hydroxyfatty acid chain on the proximal unit of lipid A or its precursors. The protein is Lipid A acyltransferase PagP of Yersinia pseudotuberculosis serotype IB (strain PB1/+).